A 691-amino-acid chain; its full sequence is Proprotein convertase subtilisin/kexin type 9 (691 aa).

An N-terminal signal peptide occupies residues 1 to 29 (MGTVSSRRLWWPLPLLLLLLLLGPAGARA). The propeptide occupies 30–151 (QEDDDGDYEE…IEEDSSVFAQ (122 aa)). Tyrosine 37 carries the sulfotyrosine modification. Serine 46 carries the phosphoserine modification. Residues 76–148 (TYVVVLKEET…VDYIEEDSSV (73 aa)) enclose the Inhibitor I9 domain. Positions 154-460 (PWNLERITPA…GWQLFCRTVW (307 aa)) constitute a Peptidase S8 domain. Catalysis depends on charge relay system residues aspartate 185 and histidine 225. Intrachain disulfides connect cysteine 222-cysteine 254 and cysteine 322-cysteine 357. Catalysis depends on serine 385, which acts as the Charge relay system. The segment at 449–691 (GAGWQLFCRT…HLAQASQELQ (243 aa)) is C-terminal domain. Cystine bridges form between cysteine 456–cysteine 526, cysteine 476–cysteine 525, and cysteine 485–cysteine 508. N-linked (GlcNAc...) asparagine glycosylation is present at asparagine 532. 6 disulfide bridges follow: cysteine 533-cysteine 600, cysteine 551-cysteine 599, cysteine 561-cysteine 587, cysteine 607-cysteine 678, cysteine 625-cysteine 677, and cysteine 634-cysteine 653. Serine 687 is modified (phosphoserine).

It belongs to the peptidase S8 family. As to quaternary structure, monomer. Can self-associate to form dimers and higher multimers which may have increased LDLR degrading activity. The precursor protein but not the mature protein may form multimers. Interacts with APOB, VLDLR, LRP8/APOER2 and BACE1. The full-length immature form (pro-PCSK9) interacts with SCNN1A, SCNN1B and SCNN1G. The pro-PCSK9 form (via C-terminal domain) interacts with LDLR. Interacts (via the C-terminal domain) with ANXA2 (via repeat Annexin 1); the interaction inhibits the degradation of LDLR. Ca(2+) serves as cofactor. Cleavage by furin and PCSK5 generates a truncated inactive protein that is unable to induce LDLR degradation. In terms of processing, undergoes autocatalytic cleavage in the endoplasmic reticulum to release the propeptide from the N-terminus and the cleavage of the propeptide is strictly required for its maturation and activation. The cleaved propeptide however remains associated with the catalytic domain through non-covalent interactions, preventing potential substrates from accessing its active site. As a result, it is secreted from cells as a propeptide-containing, enzymatically inactive protein. Post-translationally, phosphorylation protects the propeptide against proteolysis.

Its subcellular location is the cytoplasm. The protein resides in the secreted. The protein localises to the endosome. It is found in the lysosome. It localises to the cell surface. Its subcellular location is the endoplasmic reticulum. The protein resides in the golgi apparatus. Its proteolytic activity is autoinhibited by the non-covalent binding of the propeptide to the catalytic domain. Inhibited by EGTA. In terms of biological role, crucial player in the regulation of plasma cholesterol homeostasis. Binds to low-density lipid receptor family members: low density lipoprotein receptor (LDLR), very low density lipoprotein receptor (VLDLR), apolipoprotein E receptor (LRP1/APOER) and apolipoprotein receptor 2 (LRP8/APOER2), and promotes their degradation in intracellular acidic compartments. Acts via a non-proteolytic mechanism to enhance the degradation of the hepatic LDLR through a clathrin LDLRAP1/ARH-mediated pathway. May prevent the recycling of LDLR from endosomes to the cell surface or direct it to lysosomes for degradation. Can induce ubiquitination of LDLR leading to its subsequent degradation. Inhibits intracellular degradation of APOB via the autophagosome/lysosome pathway in a LDLR-independent manner. Involved in the disposal of non-acetylated intermediates of BACE1 in the early secretory pathway. Inhibits epithelial Na(+) channel (ENaC)-mediated Na(+) absorption by reducing ENaC surface expression primarily by increasing its proteasomal degradation. Regulates neuronal apoptosis via modulation of LRP8/APOER2 levels and related anti-apoptotic signaling pathways. In Saimiri boliviensis boliviensis (Bolivian squirrel monkey), this protein is Proprotein convertase subtilisin/kexin type 9 (PCSK9).